The following is a 222-amino-acid chain: Latexin (222 aa).

In terms of domain architecture, Cystatin LXN-type 1 spans Met1–Lys97. Lys55 is modified (N6-acetyllysine). Residues Asn98–Leu117 form an alpha-helical linker region. The region spanning Glu118–Glu222 is the Cystatin LXN-type 2 domain.

Belongs to the protease inhibitor I47 (latexin) family. Highly enriched in macrophages.

It localises to the cytoplasm. Functionally, hardly reversible, non-competitive, and potent inhibitor of CPA1, CPA2 and CPA4. May play a role in inflammation. This chain is Latexin (Lxn), found in Mus musculus (Mouse).